Here is a 171-residue protein sequence, read N- to C-terminus: Co-chaperone protein HscB (171 aa).

The 73-residue stretch at 2–74 (DYFTLFGLPA…LMRAEYLLSL (73 aa)) folds into the J domain.

It belongs to the HscB family. As to quaternary structure, interacts with HscA and stimulates its ATPase activity. Interacts with IscU.

Its function is as follows. Co-chaperone involved in the maturation of iron-sulfur cluster-containing proteins. Seems to help targeting proteins to be folded toward HscA. The polypeptide is Co-chaperone protein HscB (Shigella boydii serotype 18 (strain CDC 3083-94 / BS512)).